Consider the following 989-residue polypeptide: Autotransporter adhesin/invasin TibA (989 aa).

The signal sequence occupies residues 1–54 (MNKVYNTVWNESTGTWVVTSELTRKGGLRPRQIKRTVLAGLIAGLLMPSMPALA). Residues Ser74, Ser86, Ser93, Ser94, Ser97, Ser100, Ser112, Ser113, Ser116, Ser119, Ser124, Ser131, Ser132, and Ser135 are each glycosylated (O-alpha-linked (D-glycero-D-manno-heptose) serine). Tandem repeats lie at residues 82 to 100 (TTIN…SATS), 101 to 119 (TTIN…SATS), 120 to 138 (STIN…SATN), 139 to 157 (TTVN…SAMG), 158 to 176 (TIIN…SATS), 177 to 195 (ASVT…IVKA), 196 to 214 (TSVN…SATD), 215 to 233 (TVLN…SAAK), 234 to 251 (TTIN…SATG), 252 to 270 (TSIY…SATN), 271 to 289 (TTVY…NVTE), and 290 to 308 (TTIT…SASK). Residues 82 to 308 (TTINSGGKQY…QVEAGGSASK (227 aa)) are 12 X 19 AA approximate repeats. Residues 110 to 123 (HVSSGGSATSSTIN) are compositionally biased toward polar residues. Residues 110–146 (HVSSGGSATSSTINSGGHQHVSSGGSATNTTVNNGGR) are disordered. Positions 124-135 (SGGHQHVSSGGS) are enriched in low complexity. Residues 136 to 146 (ATNTTVNNGGR) are compositionally biased toward polar residues. Residues Ser151, Ser154, Ser162, Ser170, Ser176, Ser181, Ser188, Ser189, Ser200, Ser226, Ser227, Ser230, Ser238, Ser248, Ser263, Ser264, Ser275, Ser294, Ser305, Ser313, and Ser322 are each glycosylated (O-alpha-linked (D-glycero-D-manno-heptose) serine). The interval 623 to 686 (WYLKADTPPP…GTSSSPVRRT (64 aa)) is disordered. The segment covering 629–638 (TPPPVTPPTN) has biased composition (pro residues). 8 tandem repeats follow at residues 639 to 643 (PDADN), 644 to 648 (PDAGN), 649 to 653 (PDAGN), 654 to 658 (PDAGN), 659 to 663 (PDAGN), 664 to 668 (PDAGK), 669 to 673 (PGTGK), and 674 to 678 (PDAGT). The segment covering 639 to 667 (PDADNPDAGNPDAGNPDAGNPDAGNPDAG) has biased composition (low complexity). The 8 X 5 AA repeats of P-[DG]-[AGT]-[DGA]-[NKT] stretch occupies residues 639–678 (PDADNPDAGNPDAGNPDAGNPDAGNPDAGKPGTGKPDAGT). Residues 721-989 (NTRAPGGVWG…TGGVGFRINF (269 aa)) enclose the Autotransporter domain.

In terms of assembly, homohexamer. In terms of processing, glycosylated by TibC. Glycosylation is required for adhesion to and invasion of host cells. Glycosylation is dispensable for bacterial autoaggregation and biofilm formation.

It is found in the cell outer membrane. Functionally, mediates both adhesion to and invasion of human intestine epithelial cells. Also mediates bacterial cell aggregation via intercellular TibA-TibA interaction. Enhances biofilm formation. The polypeptide is Autotransporter adhesin/invasin TibA (Escherichia coli O78:H11 (strain H10407 / ETEC)).